The chain runs to 287 residues: MAASLWMGDLEPYMDENFISRAFATMGETVMSVKIIRNRLTGIPAGYCFVEFADLATAEKCLHKINGKPLPGATPAKRFKLNYVTYGKQPDNSPEYSLFVGDLTPDVDDGMLYEFFVKVYPSCRGGKVVLDQTGVSKGYGFVKFTDELEQKRALTECQGAVGLGSKPVRLSVAIPKASRVKPVEYSQMYSYSYNQYYQQYQNYYAQWGYDQNTGSYSYSYPQYGYTQSTMQTYEEVGDDALEDPMPQLDVTEANKEFMEQSEELYDALMDCHWQPLDTVSSEIPAMM.

RRM domains lie at 3 to 86 (ASLW…YVTY) and 96 to 175 (YSLF…VAIP).

The protein belongs to the RRM TRSPAP family. As to quaternary structure, component of the tRNA(Sec) complex composed at least of EEFSEC, SECISBP2, SEPHS1, SEPSECS, TRNAU1AP and tRNA(Sec). Found in a complex with tRNA(Sec). Interacts with SEPSECS. Associates with mRNP and/or polysomes. Found in a complex with EEFSEC, SECISBP2, TRNAU1AP and tRNA(Sec).

It localises to the nucleus. It is found in the cytoplasm. Involved in the early steps of selenocysteine biosynthesis and tRNA(Sec) charging to the later steps resulting in the cotranslational incorporation of selenocysteine into selenoproteins. Stabilizes the SECISBP2, EEFSEC and tRNA(Sec) complex. May be involved in the methylation of tRNA(Sec). Enhances efficiency of selenoproteins synthesis. This is tRNA selenocysteine 1-associated protein 1 (TRNAU1AP) from Pongo abelii (Sumatran orangutan).